We begin with the raw amino-acid sequence, 199 residues long: Recombination protein RecR (199 aa).

Residues 57–72 (CSICGNITEGDPCSIC) form a C4-type zinc finger. The Toprim domain maps to 80 to 176 (THVLVVEQPK…KVTRLAHGLS (97 aa)).

Belongs to the RecR family.

Functionally, may play a role in DNA repair. It seems to be involved in an RecBC-independent recombinational process of DNA repair. It may act with RecF and RecO. This is Recombination protein RecR from Levilactobacillus brevis (strain ATCC 367 / BCRC 12310 / CIP 105137 / JCM 1170 / LMG 11437 / NCIMB 947 / NCTC 947) (Lactobacillus brevis).